Here is a 320-residue protein sequence, read N- to C-terminus: tRNA pseudouridine synthase B (320 aa).

Asp48 serves as the catalytic Nucleophile.

It belongs to the pseudouridine synthase TruB family. Type 1 subfamily.

It catalyses the reaction uridine(55) in tRNA = pseudouridine(55) in tRNA. Responsible for synthesis of pseudouridine from uracil-55 in the psi GC loop of transfer RNAs. The polypeptide is tRNA pseudouridine synthase B (Mycobacterium leprae (strain TN)).